A 429-amino-acid chain; its full sequence is Enolase (429 aa).

A (2R)-2-phosphoglycerate-binding site is contributed by Gln168. Catalysis depends on Glu210, which acts as the Proton donor. Positions 247, 288, and 315 each coordinate Mg(2+). (2R)-2-phosphoglycerate contacts are provided by Lys340, Arg369, Ser370, and Lys391. The active-site Proton acceptor is Lys340.

This sequence belongs to the enolase family. Requires Mg(2+) as cofactor.

It localises to the cytoplasm. The protein localises to the secreted. Its subcellular location is the cell surface. It carries out the reaction (2R)-2-phosphoglycerate = phosphoenolpyruvate + H2O. Its pathway is carbohydrate degradation; glycolysis; pyruvate from D-glyceraldehyde 3-phosphate: step 4/5. Its function is as follows. Catalyzes the reversible conversion of 2-phosphoglycerate (2-PG) into phosphoenolpyruvate (PEP). It is essential for the degradation of carbohydrates via glycolysis. The sequence is that of Enolase from Nostoc sp. (strain PCC 7120 / SAG 25.82 / UTEX 2576).